The chain runs to 122 residues: Nitrogen fixation nifHD region GlnB-like protein 2 (122 aa).

This sequence belongs to the P(II) protein family.

Functionally, could be involved in the regulation of nitrogen fixation. The protein is Nitrogen fixation nifHD region GlnB-like protein 2 (glnBB) of Methanobacterium ivanovii.